A 303-amino-acid polypeptide reads, in one-letter code: Fe-S cluster assembly protein DRE2 (303 aa).

Residues 1 to 125 (MTHSRTALVL…WQKRAVTASA (125 aa)) form an N-terminal SAM-like domain region. Residues 126 to 188 (PVKLAPRQPV…GDAPIAENDL (63 aa)) form a linker region. Residues Cys-202, Cys-213, Cys-216, and Cys-218 each contribute to the [2Fe-2S] cluster site. Positions 202–218 (CGRTQTRRRKACKDCTC) are fe-S binding site A. [4Fe-4S] cluster-binding residues include Cys-266, Cys-269, Cys-277, and Cys-280. Short sequence motifs (cx2C motif) lie at residues 266–269 (CGSC) and 277–280 (CSGC). Residues 266 to 280 (CGSCSLGDAFRCSGC) form a fe-S binding site B region.

This sequence belongs to the anamorsin family. In terms of assembly, monomer. Interacts with TAH18. Interacts with MIA40. [2Fe-2S] cluster serves as cofactor. [4Fe-4S] cluster is required as a cofactor.

Its subcellular location is the cytoplasm. It is found in the mitochondrion intermembrane space. In terms of biological role, component of the cytosolic iron-sulfur (Fe-S) protein assembly (CIA) machinery required for the maturation of extramitochondrial Fe-S proteins. Part of an electron transfer chain functioning in an early step of cytosolic Fe-S biogenesis, facilitating the de novo assembly of a [4Fe-4S] cluster on the scaffold complex CFD1-NBP35. Electrons are transferred to DRE2 from NADPH via the FAD- and FMN-containing protein TAH18. TAH18-DRE2 are also required for the assembly of the diferric tyrosyl radical cofactor of ribonucleotide reductase (RNR), probably by providing electrons for reduction during radical cofactor maturation in the catalytic small subunit RNR2. This Eremothecium gossypii (strain ATCC 10895 / CBS 109.51 / FGSC 9923 / NRRL Y-1056) (Yeast) protein is Fe-S cluster assembly protein DRE2.